The chain runs to 61 residues: Conotoxin Cal14.6 (61 aa).

Positions 1 to 21 (MKFLLFLSVALLLTSFIETEA) are cleaved as a signal peptide. Positions 22-38 (GPVNEAGVERLFRALVG) are excised as a propeptide. The residue at position 57 (Pro-57) is a 4-hydroxyproline; partial. Pro-60 is subject to Proline amide.

In terms of processing, contains 2 disulfide bonds. Expressed by the venom duct.

Its subcellular location is the secreted. Its function is as follows. Probable neurotoxin with unknown target. Possibly targets ion channels. In Californiconus californicus (California cone), this protein is Conotoxin Cal14.6.